The chain runs to 487 residues: ATP synthase subunit beta, plastid (487 aa).

169–176 contacts ATP; it reads GGAGVGKT.

Belongs to the ATPase alpha/beta chains family. F-type ATPases have 2 components, CF(1) - the catalytic core - and CF(0) - the membrane proton channel. CF(1) has five subunits: alpha(3), beta(3), gamma(1), delta(1), epsilon(1). CF(0) has four main subunits: a(1), b(1), b'(1) and c(9-12).

Its subcellular location is the plastid membrane. It catalyses the reaction ATP + H2O + 4 H(+)(in) = ADP + phosphate + 5 H(+)(out). In terms of biological role, produces ATP from ADP in the presence of a proton gradient across the membrane. The catalytic sites are hosted primarily by the beta subunits. The sequence is that of ATP synthase subunit beta, plastid (atpB) from Cuscuta pentagona (Five-angled dodder).